Here is a 712-residue protein sequence, read N- to C-terminus: Interleukin-1 receptor-associated kinase 1 (712 aa).

Residues 27 to 106 form the Death domain; that stretch reads MCRFYKVMDA…DIITAWHPPA (80 aa). At Thr66 the chain carries Phosphothreonine; by PKC/PRKCI. Residues 105–187 are disordered; that stretch reads PAPLPSPGTT…STKPGPESSV (83 aa). The segment at 110–211 is proST region; the sequence is SPGTTAPRPS…LCEISRGTHN (102 aa). The span at 115–133 shows a compositional bias: low complexity; it reads APRPSSIPAPAEAEAWSPR. Position 131 is a phosphoserine (Ser131). A Glycyl lysine isopeptide (Lys-Gly) (interchain with G-Cter in ubiquitin) cross-link involves residue Lys134. Residues 137–154 show a composition bias toward polar residues; the sequence is SSASTFLSPAFPGSQTHS. Lys180 is covalently cross-linked (Glycyl lysine isopeptide (Lys-Gly) (interchain with G-Cter in ubiquitin)). Thr209 is subject to Phosphothreonine; by IRAK4. Residues 212–521 enclose the Protein kinase domain; it reads FSEELKIGEG…TQVYERLEKL (310 aa). ATP-binding positions include 218-226 and Lys239; that span reads IGEGGFGCV. The active-site Proton acceptor is Asp340. ATP is bound by residues 342 to 345 and Asp358; that span reads KSSN. A phosphoserine mark is found at Ser371 and Ser375. Thr387 bears the Phosphothreonine mark. 3 disordered regions span residues 532 to 591, 613 to 660, and 690 to 712; these read SEAA…SDES, APLR…PPQI, and SSLPGLGLEQDRQGPEESDEFQS. The span at 543–553 shows a compositional bias: polar residues; the sequence is QENSYVSSTGR. Ser556 bears the Phosphoserine mark. 2 stretches are compositionally biased toward low complexity: residues 562–575 and 643–658; these read QPLAAPSGASAQAA and EGLALGSSASSSSEPP.

This sequence belongs to the protein kinase superfamily. TKL Ser/Thr protein kinase family. Pelle subfamily. Homodimer. Forms a complex with TRAF6, PELI1, IRAK4 and MYD88. Direct binding of SMAD6 to PELI1 prevents complex formation and hence negatively regulates IL1R-TLR signaling and eventually NF-kappa-B-mediated gene expression. The TRAF6-PELI1-IRAK4-MYD88 complex recruits MAP3K7/TAK1, TAB1 and TAB2 to mediate NF-kappa-B activation. Interaction with MYD88 recruits IRAK1 to the stimulated receptor complex. Interacts with TOLLIP; this interaction occurs in the cytosol prior to receptor activation. Interacts with IL1RL1. Interacts with PELI1 and TRAF6. Interacts (when polyubiquitinated) with IKBKG/NEMO. Interacts with RSAD2/viperin. Interacts with IRAK1BP1. Interacts with PELI2. Interacts with ZC3H12A; this interaction increases the interaction between ZC3H12A and IKBKB/IKKB. Interacts with IRAK4. Interacts with PELI3. Interacts with INAVA; the interaction takes place upon PRR stimulation. Interacts (via C-terminus) with NFATC4 (via N-terminus). As to quaternary structure, (Microbial infection) Interacts with mumps virus protein SH; this interaction inhibits downstream NF-kappa-B pathway activation. In terms of assembly, (Microbial infection) Interacts with alphaviruses SINV, CHIKV, RRV, VEEV and EEEV capsid proteins; the interactions lead to inhibition of IRAK1-dependent signaling. Requires Mg(2+) as cofactor. Post-translationally, following recruitment on the activated receptor complex, phosphorylated on Thr-209, probably by IRAK4, resulting in a conformational change of the kinase domain, allowing further phosphorylations to take place. Thr-387 phosphorylation in the activation loop is required to achieve full enzymatic activity. Polyubiquitinated by TRAF6 after cell stimulation with IL-1-beta by PELI1, PELI2 and PELI3. Polyubiquitination occurs with polyubiquitin chains linked through 'Lys-63'. Ubiquitination promotes interaction with NEMO/IKBKG. Also sumoylated; leading to nuclear translocation. Isoform 1 and isoform 2 are ubiquitously expressed in all tissues examined, with isoform 1 being more strongly expressed than isoform 2.

The protein localises to the cytoplasm. It localises to the nucleus. Its subcellular location is the lipid droplet. The enzyme catalyses L-seryl-[protein] + ATP = O-phospho-L-seryl-[protein] + ADP + H(+). The catalysed reaction is L-threonyl-[protein] + ATP = O-phospho-L-threonyl-[protein] + ADP + H(+). In terms of biological role, serine/threonine-protein kinase that plays a critical role in initiating innate immune response against foreign pathogens. Involved in Toll-like receptor (TLR) and IL-1R signaling pathways. Is rapidly recruited by MYD88 to the receptor-signaling complex upon TLR activation. Association with MYD88 leads to IRAK1 phosphorylation by IRAK4 and subsequent autophosphorylation and kinase activation. Phosphorylates E3 ubiquitin ligases Pellino proteins (PELI1, PELI2 and PELI3) to promote pellino-mediated polyubiquitination of IRAK1. Then, the ubiquitin-binding domain of IKBKG/NEMO binds to polyubiquitinated IRAK1 bringing together the IRAK1-MAP3K7/TAK1-TRAF6 complex and the NEMO-IKKA-IKKB complex. In turn, MAP3K7/TAK1 activates IKKs (CHUK/IKKA and IKBKB/IKKB) leading to NF-kappa-B nuclear translocation and activation. Alternatively, phosphorylates TIRAP to promote its ubiquitination and subsequent degradation. Phosphorylates the interferon regulatory factor 7 (IRF7) to induce its activation and translocation to the nucleus, resulting in transcriptional activation of type I IFN genes, which drive the cell in an antiviral state. When sumoylated, translocates to the nucleus and phosphorylates STAT3. In Homo sapiens (Human), this protein is Interleukin-1 receptor-associated kinase 1.